Here is a 7913-residue protein sequence, read N- to C-terminus: Nonribosomal peptide synthetase dtxS1 (7913 aa).

Positions 263–662 are adenylation 1; it reads FEQRSRAHPN…GRNDNQVKIR (400 aa). Residues 789–865 enclose the Carrier 1 domain; that stretch reads QPLSEVEKQV…NVAGQARRTT (77 aa). S826 carries the post-translational modification O-(pantetheine 4'-phosphoryl)serine. The interval 903 to 1171 is condensation 1; that stretch reads QDAFPCTSLQ…ITTVPVRIRL (269 aa). The tract at residues 1332–1740 is adenylation 2; it reads LETQAHSRPD…GRKDAQVKIR (409 aa). In terms of domain architecture, Carrier 2 spans 1865–1941; sequence QPRTKLERQL…NLAQATGTQG (77 aa). S1902 is subject to O-(pantetheine 4'-phosphoryl)serine. The tract at residues 1965–2249 is condensation 2; it reads PAQLSPIQRL…FSTIFPVRVS (285 aa). The adenylation 3 stretch occupies residues 2863–3255; it reads LAQPHEPAIC…ARKDAQIKIR (393 aa). Residues 3380–3456 form the Carrier 3 domain; the sequence is QPLSEAERKM…NVTHQAVAQL (77 aa). At S3417 the chain carries O-(pantetheine 4'-phosphoryl)serine. The condensation 3 stretch occupies residues 3496 to 3761; it reads DAFPCTPLQE…FATLPLRVRL (266 aa). Residues 3924–4321 form an adenylation 4 region; it reads DRVRIHPNAP…GRKDDQVKLR (398 aa). Polar residues predominate over residues 4439 to 4450; sequence ELAQARTAQQGP. Positions 4439–4459 are disordered; that stretch reads ELAQARTAQQGPKRQPASEAE. In terms of domain architecture, Carrier 4 spans 4453–4529; that stretch reads QPASEAERQM…EAATQAQMLG (77 aa). Residue S4490 is modified to O-(pantetheine 4'-phosphoryl)serine. The segment at 4545-4837 is condensation 4; the sequence is QSFAQARLWF…VNMQCLRVKI (293 aa). An adenylation 5 region spans residues 5006 to 5405; it reads FRQQVAACAD…RRMDAQVKIR (400 aa). The Carrier 5 domain maps to 5933-6009; the sequence is QPTSKTQRQL…DMAEGLPLAK (77 aa). O-(pantetheine 4'-phosphoryl)serine is present on S5970. Residues 6023–6315 form a condensation 5 region; the sequence is VEQSFAQRRL…VNMQCIRIRV (293 aa). An adenylation 6 region spans residues 6481–6766; it reads FRQQALLNPD…IINAYGPTEN (286 aa). The Carrier 6 domain occupies 7394-7470; sequence QPTTDMEREM…DLACHLSPEE (77 aa). S7431 bears the O-(pantetheine 4'-phosphoryl)serine mark. A condensation 6 region spans residues 7501–7771; it reads EDVLPLTSFQ…CLNIVPIRVN (271 aa).

It belongs to the NRP synthetase family.

Its pathway is secondary metabolite biosynthesis. In terms of biological role, nonribosomal peptide synthetase; part of the gene cluster that mediates the biosynthesis of destruxins, insecticidal cyclic hexadepsipeptides which induce flaccid paralysis and visceral muscle contraction in insects through targeting the calcium channels and vacuolar-type ATPases. The aldo-keto reductase dtxS3 converts alpha-ketoisocaproic acid from deaminated leucine into alpha-hydroxyisocaproic acid (HIC), which is the first substrate for destruxin assembly by dtxS1. L-aspartate decarboxylase dtxS4 converts aspartic acid into beta-alanine, the last substrate for the destruxin assembly line performed by dtxS1. The nonribosomal peptide synthetase dtxS1 synthesizes destruxins B and B2, whereas the cytochrome P450 monooxygenase dtxS2 is required to convert destruxin B into other destruxin derivatives, including destructins C, D, A and E. Destruxin E-diol (ED) is further produced in a non-enzymatic manner from destruxin E. Destruxins play an important role in virulence and escape from insect host immune defenses. The chain is Nonribosomal peptide synthetase dtxS1 from Metarhizium robertsii (strain ARSEF 23 / ATCC MYA-3075) (Metarhizium anisopliae (strain ARSEF 23)).